We begin with the raw amino-acid sequence, 239 residues long: Adapter protein MecA (239 aa).

Basic and acidic residues predominate over residues 118–128 (EQRTKEKEAQG). Residues 118–137 (EQRTKEKEAQGSKRQKSSAR) form a disordered region.

The protein belongs to the MecA family. As to quaternary structure, homodimer.

In terms of biological role, enables the recognition and targeting of unfolded and aggregated proteins to the ClpC protease or to other proteins involved in proteolysis. This chain is Adapter protein MecA, found in Staphylococcus aureus (strain JH1).